A 619-amino-acid chain; its full sequence is Probable ATP-dependent RNA helicase DDX59 (619 aa).

Lysine 26 participates in a covalent cross-link: Glycyl lysine isopeptide (Lys-Gly) (interchain with G-Cter in SUMO2). A disordered region spans residues 57 to 98 (SESCPFPSPGGQLAEVHSVSPEQGAKDSHPSEEPVKSFSKTQ). A phosphoserine mark is found at serine 64 and serine 76. Residues 80-91 (GAKDSHPSEEPV) show a composition bias toward basic and acidic residues. Residues 104–133 (GEPICVVCGRYGEYICDKTDEDVCSLECKA) form an HIT-type zinc finger. Residues 142–161 (KEEKSKLSNPQKADSEPESP) are disordered. Phosphoserine is present on residues serine 156 and serine 160. The Q motif signature appears at 203–231 (IDFEHCSLPEVLNHNLKKSGYEVPTPIQM). A Helicase ATP-binding domain is found at 234–405 (IPVGLLGRDI…SQLLHNPVRI (172 aa)). 247 to 254 (ADTGSGKT) is a binding site for ATP. The DEAD box signature appears at 353-356 (DEAD). Residues 416-579 (NVRQIILWVE…ILPPQLLNSP (164 aa)) form the Helicase C-terminal domain.

Belongs to the DEAD box helicase family. DDX59 subfamily. In terms of assembly, interacts (via HIT-type zinc finger) with the RUVBL1/RUVBL2 complex in the presence of ADP. Expressed in fibroblasts (at protein level).

It is found in the cytoplasm. Its subcellular location is the nucleus. The enzyme catalyses ATP + H2O = ADP + phosphate + H(+). The sequence is that of Probable ATP-dependent RNA helicase DDX59 (DDX59) from Homo sapiens (Human).